Consider the following 966-residue polypeptide: Calsyntenin-2 (966 aa).

An N-terminal signal peptide occupies residues 1-20; that stretch reads MLPGRLCLVPLLLALGVGSG. Residues 21 to 835 are Extracellular-facing; sequence GGSGDGGDSR…SIQRSSVVPS (815 aa). Cadherin domains follow at residues 46-162 and 163-282; these read IETS…APTF and KEPA…MPLF. 2 N-linked (GlcNAc...) asparagine glycosylation sites follow: Asn58 and Asn100. N-linked (GlcNAc...) asparagine glycosylation is found at Asn344, Asn376, Asn720, and Asn733. The chain crosses the membrane as a helical span at residues 836–856; sequence IATVVIIISVCMLVFVVAMGV. Topologically, residues 857–966 are cytoplasmic; it reads YRVRIAHQHF…NTAGVINIWK (110 aa). A disordered region spans residues 890-966; sequence NPMEKHEGPG…NTAGVINIWK (77 aa). The segment covering 901–916 has biased composition (acidic residues); sequence GEDETTEVEEEEEAEE. Over residues 943–960 the composition is skewed to polar residues; that stretch reads QSGTSSQSPERSTWNTAG.

Belongs to the calsyntenin family. Post-translationally, proteolytically processed under normal cellular conditions. A primary zeta-cleavage generates a large extracellular (soluble) N-terminal domain (sAlc) and a short C-terminal transmembrane fragment (CTF1). A secondary cleavage catalyzed by gamma-secretase within the transmembrane domain releases the beta-Alc-gamma chain in the extracellular milieu and produces an intracellular fragment (AlcICD). This processing is strongly suppressed in the tripartite complex formed with APBA2 and APP, which seems to prevent the association with PSEN1. Restricted to the brain. In the cerebral cortex, found in the somas and neuropil of all layers. Expressed at highest levels in neurons of cortical layers 5 and 6 and, at lower levels, in neurons of the upper layers. Highly expressed in Purkinje cells. Also found in a few scattered interneurons throughout the granule cell layer and occasionally in neurons in the molecular layer (at protein level). Present throughout all cortical layers, highest levels in GABAergic neurons (based on morphology and distribution pattern).

The protein resides in the postsynaptic cell membrane. It localises to the endoplasmic reticulum membrane. It is found in the golgi apparatus membrane. Its subcellular location is the cell projection. The protein localises to the dendrite. In terms of biological role, postsynaptic adhesion molecule that binds to presynaptic neurexins to mediate synapse formation, and which is involved in learning and memory. Promotes synapse development by acting as a cell adhesion molecule at the postsynaptic membrane, which associates with neurexin-alpha at the presynaptic membrane. This Mus musculus (Mouse) protein is Calsyntenin-2.